The primary structure comprises 228 residues: Small ribosomal subunit protein uS7A (228 aa).

This sequence belongs to the universal ribosomal protein uS7 family.

The sequence is that of Small ribosomal subunit protein uS7A (RpS5a) from Drosophila melanogaster (Fruit fly).